The sequence spans 410 residues: Arginine deiminase (410 aa).

Cysteine 400 functions as the Amidino-cysteine intermediate in the catalytic mechanism.

Belongs to the arginine deiminase family.

The protein localises to the cytoplasm. The catalysed reaction is L-arginine + H2O = L-citrulline + NH4(+). Its pathway is amino-acid degradation; L-arginine degradation via ADI pathway; carbamoyl phosphate from L-arginine: step 1/2. In Streptococcus uberis (strain ATCC BAA-854 / 0140J), this protein is Arginine deiminase.